We begin with the raw amino-acid sequence, 334 residues long: Dolichyl-phosphate beta-glucosyltransferase (334 aa).

Residues 1-12 (MRALRFLIENRN) are Lumenal-facing. Residues 13-33 (TVFFTLLVALVLSLYLLVYLF) traverse the membrane as a helical segment. Over 34-334 (SHTPRPPYPE…LGIYRDNKKC (301 aa)) the chain is Cytoplasmic.

This sequence belongs to the glycosyltransferase 2 family.

It is found in the endoplasmic reticulum membrane. It carries out the reaction a di-trans,poly-cis-dolichyl phosphate + UDP-alpha-D-glucose = a di-trans,poly-cis-dolichyl beta-D-glucosyl phosphate + UDP. Its pathway is protein modification; protein glycosylation. In terms of biological role, endoplasmic reticulum membrane-bound UDP-glucose:dolichyl-phosphate glucosyltransferase involved in protein N-linked glycosylation. This is Dolichyl-phosphate beta-glucosyltransferase from Saccharomyces cerevisiae (strain ATCC 204508 / S288c) (Baker's yeast).